The chain runs to 213 residues: Orotate phosphoribosyltransferase (213 aa).

Lys25 is a binding site for 5-phospho-alpha-D-ribose 1-diphosphate. 33–34 (FF) is an orotate binding site. 5-phospho-alpha-D-ribose 1-diphosphate-binding positions include 71–72 (YK), Arg98, Lys99, Lys102, His104, and 124–132 (DDVITSGTA). The orotate site is built by Thr128 and Arg156.

This sequence belongs to the purine/pyrimidine phosphoribosyltransferase family. PyrE subfamily. As to quaternary structure, homodimer. Requires Mg(2+) as cofactor.

It carries out the reaction orotidine 5'-phosphate + diphosphate = orotate + 5-phospho-alpha-D-ribose 1-diphosphate. The protein operates within pyrimidine metabolism; UMP biosynthesis via de novo pathway; UMP from orotate: step 1/2. In terms of biological role, catalyzes the transfer of a ribosyl phosphate group from 5-phosphoribose 1-diphosphate to orotate, leading to the formation of orotidine monophosphate (OMP). In Buchnera aphidicola subsp. Acyrthosiphon pisum (strain 5A), this protein is Orotate phosphoribosyltransferase.